The sequence spans 421 residues: Atrochrysone carboxyl ACP thioesterase (421 aa).

Residues His207, His209, Asp211, and His212 each contribute to the Zn(2+) site. The active-site Proton donor/acceptor is the Asp211.

This sequence belongs to the metallo-beta-lactamase superfamily. Requires Zn(2+) as cofactor. In terms of tissue distribution, specifically expressed in conidia.

The catalysed reaction is atrochrysone carboxyl-[ACP] + H2O = atrochrysone carboxylate + holo-[ACP] + H(+). It participates in secondary metabolite biosynthesis. Its function is as follows. Atrochrysone carboxyl ACP thioesterase; part of the gene cluster that mediates the biosynthesis of trypacidin, a mycotoxin with antiprotozoal activity and that plays a role in the infection process. The pathway begins with the synthesis of atrochrysone thioester by the polyketide synthase (PKS) tpcC. The atrochrysone carboxyl ACP thioesterase tpcB then breaks the thioester bond and releases the atrochrysone carboxylic acid from tpcC. The decarboxylase tpcK converts atrochrysone carboxylic acid to atrochrysone which is further reduced into emodin anthrone. The next step is performed by the emodin anthrone oxygenase tpcL that catalyzes the oxidation of emodin anthrone to emodin. Emodin O-methyltransferase encoded by tpcA catalyzes methylation of the 8-hydroxy group of emodin to form questin. Ring cleavage of questin by questin oxidase tpcI leads to desmethylsulochrin via several intermediates including questin epoxide. Another methylation step catalyzed by tpcM leads to the formation of sulochrin which is further converted to monomethylsulfochrin by tpcH. Finally, the tpcJ catalyzes the conversion of monomethylsulfochrin to trypacidin. Trypacidin is toxic for human pulmonary and bronchial epithelial cells by initiating the intracellular formation of nitric oxide (NO) and hydrogen peroxide (H(2)O(2)), thus triggering host necrotic cell death. The trypacidin pathway is also able to produce endocrocin via a distinct route from the endocrocin Enc pathway. This is Atrochrysone carboxyl ACP thioesterase from Aspergillus fumigatus (strain ATCC MYA-4609 / CBS 101355 / FGSC A1100 / Af293) (Neosartorya fumigata).